A 196-amino-acid chain; its full sequence is Imidazoleglycerol-phosphate dehydratase (196 aa).

It belongs to the imidazoleglycerol-phosphate dehydratase family.

The protein localises to the cytoplasm. It carries out the reaction D-erythro-1-(imidazol-4-yl)glycerol 3-phosphate = 3-(imidazol-4-yl)-2-oxopropyl phosphate + H2O. It participates in amino-acid biosynthesis; L-histidine biosynthesis; L-histidine from 5-phospho-alpha-D-ribose 1-diphosphate: step 6/9. The sequence is that of Imidazoleglycerol-phosphate dehydratase from Solidesulfovibrio magneticus (strain ATCC 700980 / DSM 13731 / RS-1) (Desulfovibrio magneticus).